The sequence spans 229 residues: Ribonuclease HII (229 aa).

The RNase H type-2 domain occupies 34–225 (GPVAGVDEAG…VKAAHDQWLQ (192 aa)). Positions 40, 41, and 134 each coordinate a divalent metal cation.

The protein belongs to the RNase HII family. Requires Mn(2+) as cofactor. The cofactor is Mg(2+).

It localises to the cytoplasm. It catalyses the reaction Endonucleolytic cleavage to 5'-phosphomonoester.. In terms of biological role, endonuclease that specifically degrades the RNA of RNA-DNA hybrids. This is Ribonuclease HII from Corynebacterium diphtheriae (strain ATCC 700971 / NCTC 13129 / Biotype gravis).